A 236-amino-acid polypeptide reads, in one-letter code: uncharacterized protein (236 aa).

Residues 3–208 (ILGLTGSIAT…PSYFFTLLCL (206 aa)) enclose the DPCK domain. Position 8-15 (8-15 (GSIATGKS)) interacts with ATP. Residues Ser-82 and Ser-86 each carry the phosphoserine modification.

It belongs to the CoaE family.

It localises to the cytoplasm. This is an uncharacterized protein from Schizosaccharomyces pombe (strain 972 / ATCC 24843) (Fission yeast).